A 666-amino-acid polypeptide reads, in one-letter code: Endogenous retrovirus group K member 6 Gag polyprotein (666 aa).

Gly-2 carries the N-myristoyl glycine lipid modification. Positions 165–264 are disordered; it reads GKGPELVGPS…APPSRQGSKL (100 aa). Over residues 232–247 the composition is skewed to pro residues; it reads GMPPAPQGRAPYPQPP. 2 CCHC-type zinc fingers span residues 544-561 and 580-597; these read RKCYNCGQIGHLKKNCPV and DLCPRCKKGKHWASQCRS. The disordered stretch occupies residues 598–642; that stretch reads KFDKNGQPLSGNEQRGQPQAPQQTGAFPIQPFVPQGFQGQQPPLS. Polar residues predominate over residues 604 to 622; the sequence is QPLSGNEQRGQPQAPQQTG. Residues 624–640 show a composition bias toward low complexity; sequence FPIQPFVPQGFQGQQPP.

Belongs to the beta type-B retroviral Gag protein family. HERV class-II K(HML-2) gag subfamily. Post-translationally, myristoylation is essential for retroviral assembly. Alteration of the glycine residue leads to a block in the budding of particles and an accumulation of Gag inside the cell. In terms of processing, specific enzymatic cleavages may yield mature proteins.

The protein resides in the cell membrane. In terms of biological role, the products of the Gag polyproteins of infectious retroviruses perform highly complex orchestrated tasks during the assembly, budding, maturation, and infection stages of the viral replication cycle. During viral assembly, the proteins form membrane associations and self-associations that ultimately result in budding of an immature virion from the infected cell. Gag precursors also function during viral assembly to selectively bind and package two plus strands of genomic RNA. Endogenous Gag proteins may have kept, lost or modified their original function during evolution. This chain is Endogenous retrovirus group K member 6 Gag polyprotein (ERVK-6), found in Homo sapiens (Human).